Reading from the N-terminus, the 237-residue chain is NADPH-dependent FMN reductase ArsH (237 aa).

Residues 39 to 46 (SNRECSYS) and 102 to 107 (SPERHG) each bind FMN.

The protein belongs to the ArsH family. In terms of assembly, homotetramer. FMN serves as cofactor.

Functionally, has NADPH-dependent FMN reductase activity and high NADPH-dependent ferric reductase activity with highest activity for Fe(3+) as substrate. No activity with NADH, iron trichloride, Cu(2+) or Ag(+). May be involved in cytosolic ferric iron assimilation as an NADPH-dependent ferric reductase in vivo. This chain is NADPH-dependent FMN reductase ArsH, found in Acidithiobacillus ferrooxidans (strain ATCC 23270 / DSM 14882 / CIP 104768 / NCIMB 8455) (Ferrobacillus ferrooxidans (strain ATCC 23270)).